Here is a 343-residue protein sequence, read N- to C-terminus: Phosphoribosylformylglycinamidine cyclo-ligase (343 aa).

This sequence belongs to the AIR synthase family.

The protein resides in the cytoplasm. The catalysed reaction is 2-formamido-N(1)-(5-O-phospho-beta-D-ribosyl)acetamidine + ATP = 5-amino-1-(5-phospho-beta-D-ribosyl)imidazole + ADP + phosphate + H(+). Its pathway is purine metabolism; IMP biosynthesis via de novo pathway; 5-amino-1-(5-phospho-D-ribosyl)imidazole from N(2)-formyl-N(1)-(5-phospho-D-ribosyl)glycinamide: step 2/2. The protein is Phosphoribosylformylglycinamidine cyclo-ligase of Carboxydothermus hydrogenoformans (strain ATCC BAA-161 / DSM 6008 / Z-2901).